The primary structure comprises 927 residues: Protein unc-45 homolog B (927 aa).

TPR repeat units follow at residues 4 to 37 (PVQL…ITDK), 41 to 74 (AVLY…DASD), and 76 to 108 (KALF…EPKN). ARM repeat units follow at residues 167–206 (DAGA…GMCT), 209–248 (RARA…NIVD), and 746–785 (DKLR…NLAV).

The protein localises to the cytoplasm. Its subcellular location is the myofibril. It is found in the sarcomere. The protein resides in the z line. It localises to the a band. The protein localises to the perinuclear region. Its subcellular location is the cytosol. Acts as a co-chaperone for HSP90 and is required for proper folding of the myosin motor domain. Plays a role in sarcomere formation during muscle cell assembly. Is necessary for normal early lens development. The polypeptide is Protein unc-45 homolog B (Xenopus laevis (African clawed frog)).